The chain runs to 548 residues: Mannosyltransferase APTG1 (548 aa).

Positions 1-23 are disordered; it reads MDIRKRKNAGGDGDGGADGASVN. Transmembrane regions (helical) follow at residues 41 to 61, 98 to 118, and 146 to 166; these read IFLF…TYFN, LFAF…YIMI, and GNVA…FFCL. An N-linked (GlcNAc...) asparagine glycan is attached at N167. The next 7 helical transmembrane spans lie at 169-189, 204-224, 238-258, 260-280, 294-314, 320-340, and 342-362; these read TFSN…WPCI, LVIA…WLYV, FIIL…CLLD, LMYG…FLSS, FTQG…AGII, KLSA…HKEF, and FVLP…AQME. Residue N382 is glycosylated (N-linked (GlcNAc...) asparagine). A helical transmembrane segment spans residues 392-412; the sequence is LSVYFLLATNIPMALYMSLFH. A glycan (N-linked (GlcNAc...) asparagine) is linked at N490.

Belongs to the glycosyltransferase 22 family. Mostly expressed, mainly in vascular tissues, in leaves, roots, stems, flowers, siliques and pollen, and, to a lower extent, in seedlings.

It is found in the endoplasmic reticulum membrane. Its function is as follows. Mannosyltransferase involved in glycosylphosphatidylinositol-anchor biosynthesis. Required for the pollen tube micropylar guidance and embryo development by regulating GPI-anchor mediated protein localization (e.g. COBL10 and A36). The protein is Mannosyltransferase APTG1 of Arabidopsis thaliana (Mouse-ear cress).